The sequence spans 348 residues: GTPase Obg (348 aa).

The region spanning 1–159 (MKFLDQARIY…MTLWLRLKLI (159 aa)) is the Obg domain. In terms of domain architecture, OBG-type G spans 160–327 (ADAGLVGLPN…TLQSLLAAID (168 aa)). GTP is bound by residues 166–173 (GLPNAGKS), 191–195 (FTTLH), 212–215 (DIPG), 279–282 (SKID), and 308–310 (SAA). Mg(2+)-binding residues include serine 173 and threonine 193.

The protein belongs to the TRAFAC class OBG-HflX-like GTPase superfamily. OBG GTPase family. In terms of assembly, monomer. Mg(2+) is required as a cofactor.

The protein localises to the cytoplasm. In terms of biological role, an essential GTPase which binds GTP, GDP and possibly (p)ppGpp with moderate affinity, with high nucleotide exchange rates and a fairly low GTP hydrolysis rate. Plays a role in control of the cell cycle, stress response, ribosome biogenesis and in those bacteria that undergo differentiation, in morphogenesis control. This is GTPase Obg from Beijerinckia indica subsp. indica (strain ATCC 9039 / DSM 1715 / NCIMB 8712).